The sequence spans 366 residues: Aminomethyltransferase (366 aa).

This sequence belongs to the GcvT family. In terms of assembly, the glycine cleavage system is composed of four proteins: P, T, L and H.

The enzyme catalyses N(6)-[(R)-S(8)-aminomethyldihydrolipoyl]-L-lysyl-[protein] + (6S)-5,6,7,8-tetrahydrofolate = N(6)-[(R)-dihydrolipoyl]-L-lysyl-[protein] + (6R)-5,10-methylene-5,6,7,8-tetrahydrofolate + NH4(+). In terms of biological role, the glycine cleavage system catalyzes the degradation of glycine. In Bacillus mycoides (strain KBAB4) (Bacillus weihenstephanensis), this protein is Aminomethyltransferase.